Reading from the N-terminus, the 287-residue chain is Casein kinase II subunit beta-1 (287 aa).

The segment at 1–97 (MYRDRGTVNS…ESDVSGSDGE (97 aa)) is disordered. A compositionally biased stretch (basic and acidic residues) spans 13 to 25 (EVVDRKRINDALE). A compositionally biased stretch (low complexity) spans 41–50 (GTVTAATTTA). Over residues 78–97 (SDDESDTDSEESDVSGSDGE) the composition is skewed to acidic residues.

This sequence belongs to the casein kinase 2 subunit beta family. As to quaternary structure, heterotetramer of two catalytic alpha subunits and two regulatory beta subunits. Interacts with CCA1. Interacts with LHY. In terms of processing, phosphorylated by alpha subunit.

The protein resides in the cytoplasm. Its subcellular location is the cytosol. The protein localises to the nucleus. Functionally, plays a complex role in regulating the basal catalytic activity of the alpha subunit. The tetrameric holoenzyme CK2, composed of two alpha and two beta subunits, phosphorylates the transcription factor GBFl, resulting in stimulation of its DNA binding activity. CK2 phosphorylates the transcription factor PIF1 after an exposure to light, resulting in a proteasome-dependent degradation of PIF1 and promotion of photomorphogenesis. CK2 phosphorylates translation initiation factors. May participate in the regulation of the initiation of translation. Stimulates the binding of CCA1 to promoters. This is Casein kinase II subunit beta-1 (CKB1) from Arabidopsis thaliana (Mouse-ear cress).